Consider the following 288-residue polypeptide: UTP--glucose-1-phosphate uridylyltransferase (288 aa).

This sequence belongs to the UDPGP type 2 family.

The catalysed reaction is alpha-D-glucose 1-phosphate + UTP + H(+) = UDP-alpha-D-glucose + diphosphate. It functions in the pathway glycolipid metabolism; diglucosyl-diacylglycerol biosynthesis. Catalyzes the formation of UDP-glucose from glucose-1-phosphate and UTP. This is an intermediate step in the biosynthesis of diglucosyl-diacylglycerol (Glc2-DAG), i.e. a glycolipid found in the membrane, which is also used as a membrane anchor for lipoteichoic acid (LTA). This chain is UTP--glucose-1-phosphate uridylyltransferase (gtaB), found in Staphylococcus haemolyticus (strain JCSC1435).